Reading from the N-terminus, the 693-residue chain is Probable L-type lectin-domain containing receptor kinase VI.1 (693 aa).

A signal peptide spans 1-22 (MGIARSINSFMFFFFLMILSNA). N21, N44, N71, N89, N141, N180, and N223 each carry an N-linked (GlcNAc...) asparagine glycan. The Extracellular portion of the chain corresponds to 23 to 311 (SKSSVLAEAT…SNKKGYNSQV (289 aa)). The legume-lectin like stretch occupies residues 33–279 (TAKFTFIGFK…AHYVMGWSFS (247 aa)). The chain crosses the membrane as a helical span at residues 312-332 (IVLIVALSIVTLVLLVLLFIF). Residues 333–693 (VMYKRRIQEE…VSSSSIVSGR (361 aa)) lie on the Cytoplasmic side of the membrane. Residues 368 to 642 (FKESEIIGTG…LRYLNGEENV (275 aa)) enclose the Protein kinase domain. ATP is bound by residues 374-382 (IGTGGFGIV) and K396. The active-site Proton acceptor is D495. The interval 670 to 693 (DRASSSNTFSSFSNVSSSSIVSGR) is disordered.

This sequence in the C-terminal section; belongs to the protein kinase superfamily. Ser/Thr protein kinase family. In the N-terminal section; belongs to the leguminous lectin family.

The protein resides in the cell membrane. The enzyme catalyses L-seryl-[protein] + ATP = O-phospho-L-seryl-[protein] + ADP + H(+). It carries out the reaction L-threonyl-[protein] + ATP = O-phospho-L-threonyl-[protein] + ADP + H(+). This chain is Probable L-type lectin-domain containing receptor kinase VI.1 (LECRK61), found in Arabidopsis thaliana (Mouse-ear cress).